Consider the following 398-residue polypeptide: Set1 complex component swd1 (398 aa).

WD repeat units follow at residues 22–61 (LKHG…VSRV), 64–103 (GHTR…IVYQ), 162–202 (NRSK…IRSS), 247–295 (KFQD…KILE), and 296–336 (GPKE…SWSA).

As to quaternary structure, component of the Set1 complex composed of ash2, sdc1, set1, shg1, spp1, swd1, swd2 and swd3.

Its subcellular location is the nucleus. In terms of biological role, the Set1 complex specifically methylates 'Lys-4' of histone H3. This chain is Set1 complex component swd1 (swd1), found in Schizosaccharomyces pombe (strain 972 / ATCC 24843) (Fission yeast).